Reading from the N-terminus, the 445-residue chain is tRNA(Ile)-lysidine synthase (445 aa).

33–38 lines the ATP pocket; the sequence is SGGLDS.

It belongs to the tRNA(Ile)-lysidine synthase family.

It is found in the cytoplasm. The catalysed reaction is cytidine(34) in tRNA(Ile2) + L-lysine + ATP = lysidine(34) in tRNA(Ile2) + AMP + diphosphate + H(+). Ligates lysine onto the cytidine present at position 34 of the AUA codon-specific tRNA(Ile) that contains the anticodon CAU, in an ATP-dependent manner. Cytidine is converted to lysidine, thus changing the amino acid specificity of the tRNA from methionine to isoleucine. The chain is tRNA(Ile)-lysidine synthase from Pseudomonas syringae pv. tomato (strain ATCC BAA-871 / DC3000).